Here is a 453-residue protein sequence, read N- to C-terminus: tRNA modification GTPase MnmE (453 aa).

R22, E79, and K119 together coordinate (6S)-5-formyl-5,6,7,8-tetrahydrofolate. Positions 215–376 (GMKVVIAGRP…LKQHLKSLMG (162 aa)) constitute a TrmE-type G domain. N225 is a K(+) binding site. GTP-binding positions include 225–230 (NAGKSS), 244–250 (TEIAGTT), 269–272 (DTAG), and 334–337 (NKAD). S229 contacts Mg(2+). T244, I246, and T249 together coordinate K(+). T250 is a Mg(2+) binding site. Position 453 (K453) interacts with (6S)-5-formyl-5,6,7,8-tetrahydrofolate.

It belongs to the TRAFAC class TrmE-Era-EngA-EngB-Septin-like GTPase superfamily. TrmE GTPase family. As to quaternary structure, homodimer. Heterotetramer of two MnmE and two MnmG subunits. It depends on K(+) as a cofactor.

It is found in the cytoplasm. Functionally, exhibits a very high intrinsic GTPase hydrolysis rate. Involved in the addition of a carboxymethylaminomethyl (cmnm) group at the wobble position (U34) of certain tRNAs, forming tRNA-cmnm(5)s(2)U34. This Shewanella sp. (strain MR-7) protein is tRNA modification GTPase MnmE.